An 87-amino-acid polypeptide reads, in one-letter code: Small ribosomal subunit protein uS17 (87 aa).

The protein belongs to the universal ribosomal protein uS17 family. As to quaternary structure, part of the 30S ribosomal subunit.

One of the primary rRNA binding proteins, it binds specifically to the 5'-end of 16S ribosomal RNA. The protein is Small ribosomal subunit protein uS17 of Thiobacillus denitrificans (strain ATCC 25259 / T1).